Reading from the N-terminus, the 262-residue chain is Sperm microtubule inner protein 6 (262 aa).

It belongs to the SPMIP6 family. As to quaternary structure, microtubule inner protein component of sperm flagellar doublet microtubules. Interacts with alpha-tubulin. Expressed in testis. Strongly expressed in ciliated epithelial cells with lower levels in goblet cells (at protein level).

The protein localises to the cytoplasm. It localises to the cytoskeleton. The protein resides in the nucleus. It is found in the mitochondrion. Its subcellular location is the flagellum axoneme. In terms of biological role, may participate in intramanchette transport and midpiece formation of the sperm tail. May play a potential role in somatic cell proliferation. This is Sperm microtubule inner protein 6 from Homo sapiens (Human).